The chain runs to 364 residues: UDP-N-acetylglucosamine--N-acetylmuramyl-(pentapeptide) pyrophosphoryl-undecaprenol N-acetylglucosamine transferase (364 aa).

Residues 12–14 (TGG), Asn124, Arg167, Ser195, Ile249, 268–273 (ALTVSE), and Gln294 each bind UDP-N-acetyl-alpha-D-glucosamine.

It belongs to the glycosyltransferase 28 family. MurG subfamily.

It is found in the cell inner membrane. It carries out the reaction di-trans,octa-cis-undecaprenyl diphospho-N-acetyl-alpha-D-muramoyl-L-alanyl-D-glutamyl-meso-2,6-diaminopimeloyl-D-alanyl-D-alanine + UDP-N-acetyl-alpha-D-glucosamine = di-trans,octa-cis-undecaprenyl diphospho-[N-acetyl-alpha-D-glucosaminyl-(1-&gt;4)]-N-acetyl-alpha-D-muramoyl-L-alanyl-D-glutamyl-meso-2,6-diaminopimeloyl-D-alanyl-D-alanine + UDP + H(+). The protein operates within cell wall biogenesis; peptidoglycan biosynthesis. Cell wall formation. Catalyzes the transfer of a GlcNAc subunit on undecaprenyl-pyrophosphoryl-MurNAc-pentapeptide (lipid intermediate I) to form undecaprenyl-pyrophosphoryl-MurNAc-(pentapeptide)GlcNAc (lipid intermediate II). The polypeptide is UDP-N-acetylglucosamine--N-acetylmuramyl-(pentapeptide) pyrophosphoryl-undecaprenol N-acetylglucosamine transferase (Alteromonas mediterranea (strain DSM 17117 / CIP 110805 / LMG 28347 / Deep ecotype)).